Consider the following 623-residue polypeptide: DNA polymerase alpha subunit B (623 aa).

A disordered region spans residues Ile113–Phe151. A compositionally biased stretch (polar residues) spans Ser121–Arg130.

This sequence belongs to the DNA polymerase alpha subunit B family. In terms of assembly, DNA polymerase alpha:primase is a four subunit enzyme complex, which is assembled throughout the cell cycle, and consists of the two DNA polymerase subunits A and B, and the DNA primase large and small subunits. Subunit B binds to subunit A.

Its subcellular location is the nucleus. Functionally, may play an essential role at the early stage of chromosomal DNA replication by coupling the polymerase alpha/primase complex to the cellular replication machinery. The polypeptide is DNA polymerase alpha subunit B (polA2) (Dictyostelium discoideum (Social amoeba)).